We begin with the raw amino-acid sequence, 397 residues long: Phosphopentomutase (397 aa).

Aspartate 10, aspartate 296, histidine 301, aspartate 337, histidine 338, and histidine 349 together coordinate Mn(2+).

This sequence belongs to the phosphopentomutase family. Mn(2+) serves as cofactor.

The protein localises to the cytoplasm. It catalyses the reaction 2-deoxy-alpha-D-ribose 1-phosphate = 2-deoxy-D-ribose 5-phosphate. The catalysed reaction is alpha-D-ribose 1-phosphate = D-ribose 5-phosphate. Its pathway is carbohydrate degradation; 2-deoxy-D-ribose 1-phosphate degradation; D-glyceraldehyde 3-phosphate and acetaldehyde from 2-deoxy-alpha-D-ribose 1-phosphate: step 1/2. Its function is as follows. Isomerase that catalyzes the conversion of deoxy-ribose 1-phosphate (dRib-1-P) and ribose 1-phosphate (Rib-1-P) to deoxy-ribose 5-phosphate (dRib-5-P) and ribose 5-phosphate (Rib-5-P), respectively. This is Phosphopentomutase from Elusimicrobium minutum (strain Pei191).